Here is a 177-residue protein sequence, read N- to C-terminus: Transcription antitermination protein NusB (177 aa).

The disordered stretch occupies residues 1–35 (MTDSTHPTPSARPPRQPRTGTTGTGARKAGSKSGR). Residues 17 to 28 (PRTGTTGTGARK) are compositionally biased toward low complexity.

The protein belongs to the NusB family.

Its function is as follows. Involved in transcription antitermination. Required for transcription of ribosomal RNA (rRNA) genes. Binds specifically to the boxA antiterminator sequence of the ribosomal RNA (rrn) operons. In Acidovorax sp. (strain JS42), this protein is Transcription antitermination protein NusB.